Reading from the N-terminus, the 117-residue chain is MTRIKRGYIARRRRTKLRLFASSFRGAHSRLTRTMTQQRIRALVSAHRDRGKRKRDFRRLWITRINAVIHEMGVFYSYNRFIHNLYKKQLLLNRKILAQIALLNRSCLYTISNEIKE.

It belongs to the bacterial ribosomal protein bL20 family.

Its subcellular location is the plastid. It is found in the chloroplast. Functionally, binds directly to 23S ribosomal RNA and is necessary for the in vitro assembly process of the 50S ribosomal subunit. It is not involved in the protein synthesizing functions of that subunit. The protein is Large ribosomal subunit protein bL20c of Nasturtium officinale (Watercress).